Here is a 125-residue protein sequence, read N- to C-terminus: Major intrinsically disordered NOTCH2-binding receptor 1-like (125 aa).

A glycan (N-linked (GlcNAc...) asparagine) is linked at N37. The chain crosses the membrane as a helical span at residues 100-120 (FAFITLFVCAVVIIITVPIVV).

It belongs to the MINAR family. Interacts with NOTCH2. In terms of tissue distribution, highly expressed in the auditory hair cells.

It localises to the lysosome membrane. The protein localises to the endoplasmic reticulum membrane. In terms of biological role, binds cholesterol and may regulate the distribution and homeostasis of cholesterol in hair cells. May play a role in angiogenesis. The protein is Major intrinsically disordered NOTCH2-binding receptor 1-like of Danio rerio (Zebrafish).